Reading from the N-terminus, the 301-residue chain is Light-independent protochlorophyllide reductase iron-sulfur ATP-binding protein (301 aa).

Over residues 1–13 (MNVTLRPPLAAAP) the composition is skewed to low complexity. Residues 1 to 22 (MNVTLRPPLAAAPRRPDGAGSV) are disordered. ATP-binding positions include 45–50 (GIGKST) and Lys74. Ser49 is a Mg(2+) binding site. The [4Fe-4S] cluster site is built by Cys130 and Cys164. ATP contacts are provided by residues 215-216 (NR) and 239-241 (PDL).

This sequence belongs to the NifH/BchL/ChlL family. In terms of assembly, homodimer. Protochlorophyllide reductase is composed of three subunits; BchL, BchN and BchB. Requires [4Fe-4S] cluster as cofactor.

The catalysed reaction is chlorophyllide a + oxidized 2[4Fe-4S]-[ferredoxin] + 2 ADP + 2 phosphate = protochlorophyllide a + reduced 2[4Fe-4S]-[ferredoxin] + 2 ATP + 2 H2O. It participates in porphyrin-containing compound metabolism; bacteriochlorophyll biosynthesis (light-independent). Its function is as follows. Component of the dark-operative protochlorophyllide reductase (DPOR) that uses Mg-ATP and reduced ferredoxin to reduce ring D of protochlorophyllide (Pchlide) to form chlorophyllide a (Chlide). This reaction is light-independent. The L component serves as a unique electron donor to the NB-component of the complex, and binds Mg-ATP. This is Light-independent protochlorophyllide reductase iron-sulfur ATP-binding protein from Bradyrhizobium sp. (strain ORS 278).